A 467-amino-acid polypeptide reads, in one-letter code: Glutamate--tRNA ligase (467 aa).

A 'HIGH' region motif is present at residues 13-23 (PSPTGFLHLGG). The span at 118–133 (ARGDKPRYDGTWRPEP) shows a compositional bias: basic and acidic residues. Residues 118–141 (ARGDKPRYDGTWRPEPGKTLPAIP) form a disordered region. A 'KMSKS' region motif is present at residues 245–249 (KLSKR). K248 is an ATP binding site.

This sequence belongs to the class-I aminoacyl-tRNA synthetase family. Glutamate--tRNA ligase type 1 subfamily. In terms of assembly, monomer.

The protein localises to the cytoplasm. It catalyses the reaction tRNA(Glu) + L-glutamate + ATP = L-glutamyl-tRNA(Glu) + AMP + diphosphate. Its function is as follows. Catalyzes the attachment of glutamate to tRNA(Glu) in a two-step reaction: glutamate is first activated by ATP to form Glu-AMP and then transferred to the acceptor end of tRNA(Glu). The protein is Glutamate--tRNA ligase of Bordetella avium (strain 197N).